Reading from the N-terminus, the 152-residue chain is D-aminoacyl-tRNA deacylase (152 aa).

The Gly-cisPro motif, important for rejection of L-amino acids signature appears at 142–143 (GP).

This sequence belongs to the DTD family. As to quaternary structure, homodimer.

Its subcellular location is the cytoplasm. The enzyme catalyses glycyl-tRNA(Ala) + H2O = tRNA(Ala) + glycine + H(+). It catalyses the reaction a D-aminoacyl-tRNA + H2O = a tRNA + a D-alpha-amino acid + H(+). An aminoacyl-tRNA editing enzyme that deacylates mischarged D-aminoacyl-tRNAs. Also deacylates mischarged glycyl-tRNA(Ala), protecting cells against glycine mischarging by AlaRS. Acts via tRNA-based rather than protein-based catalysis; rejects L-amino acids rather than detecting D-amino acids in the active site. By recycling D-aminoacyl-tRNA to D-amino acids and free tRNA molecules, this enzyme counteracts the toxicity associated with the formation of D-aminoacyl-tRNA entities in vivo and helps enforce protein L-homochirality. The sequence is that of D-aminoacyl-tRNA deacylase from Paraburkholderia xenovorans (strain LB400).